A 473-amino-acid chain; its full sequence is Aspartyl/glutamyl-tRNA(Asn/Gln) amidotransferase subunit B (473 aa).

This sequence belongs to the GatB/GatE family. GatB subfamily. In terms of assembly, heterotrimer of A, B and C subunits.

The enzyme catalyses L-glutamyl-tRNA(Gln) + L-glutamine + ATP + H2O = L-glutaminyl-tRNA(Gln) + L-glutamate + ADP + phosphate + H(+). It catalyses the reaction L-aspartyl-tRNA(Asn) + L-glutamine + ATP + H2O = L-asparaginyl-tRNA(Asn) + L-glutamate + ADP + phosphate + 2 H(+). Allows the formation of correctly charged Asn-tRNA(Asn) or Gln-tRNA(Gln) through the transamidation of misacylated Asp-tRNA(Asn) or Glu-tRNA(Gln) in organisms which lack either or both of asparaginyl-tRNA or glutaminyl-tRNA synthetases. The reaction takes place in the presence of glutamine and ATP through an activated phospho-Asp-tRNA(Asn) or phospho-Glu-tRNA(Gln). The chain is Aspartyl/glutamyl-tRNA(Asn/Gln) amidotransferase subunit B from Francisella tularensis subsp. mediasiatica (strain FSC147).